The following is a 358-amino-acid chain: Photosystem II protein D1 (358 aa).

The next 3 helical transmembrane spans lie at Tyr28–Ile45, His117–Leu132, and Trp141–Ala155. His117 lines the chlorophyll a pocket. Trp125 is a pheophytin a binding site. [CaMn4O5] cluster is bound by residues Asp169 and Glu188. A helical transmembrane segment spans residues Phe196–Leu217. His197 contributes to the chlorophyll a binding site. A quinone-binding positions include His214 and Ser263–Phe264. Position 214 (His214) interacts with Fe cation. Fe cation is bound at residue His271. The helical transmembrane segment at Phe273 to Leu287 threads the bilayer. His331, Glu332, Asp341, and Ala343 together coordinate [CaMn4O5] cluster. The propeptide occupies Ala344 to Gly358.

The protein belongs to the reaction center PufL/M/PsbA/D family. PSII is composed of 1 copy each of membrane proteins PsbA, PsbB, PsbC, PsbD, PsbE, PsbF, PsbH, PsbI, PsbJ, PsbK, PsbL, PsbM, PsbT, PsbX, PsbY, Psb30/Ycf12, peripheral proteins PsbO, CyanoQ (PsbQ), PsbU, PsbV and a large number of cofactors. It forms dimeric complexes. The cofactor is The D1/D2 heterodimer binds P680, chlorophylls that are the primary electron donor of PSII, and subsequent electron acceptors. It shares a non-heme iron and each subunit binds pheophytin, quinone, additional chlorophylls, carotenoids and lipids. D1 provides most of the ligands for the Mn4-Ca-O5 cluster of the oxygen-evolving complex (OEC). There is also a Cl(-1) ion associated with D1 and D2, which is required for oxygen evolution. The PSII complex binds additional chlorophylls, carotenoids and specific lipids.. Post-translationally, tyr-160 forms a radical intermediate that is referred to as redox-active TyrZ, YZ or Y-Z. In terms of processing, C-terminally processed by CtpA; processing is essential to allow assembly of the oxygen-evolving complex and thus photosynthetic growth.

It is found in the cellular thylakoid membrane. The catalysed reaction is 2 a plastoquinone + 4 hnu + 2 H2O = 2 a plastoquinol + O2. Its function is as follows. Photosystem II (PSII) is a light-driven water:plastoquinone oxidoreductase that uses light energy to abstract electrons from H(2)O, generating O(2) and a proton gradient subsequently used for ATP formation. It consists of a core antenna complex that captures photons, and an electron transfer chain that converts photonic excitation into a charge separation. The D1/D2 (PsbA/PsbD) reaction center heterodimer binds P680, the primary electron donor of PSII as well as several subsequent electron acceptors. The protein is Photosystem II protein D1 of Prochlorococcus marinus (strain MIT 9303).